Reading from the N-terminus, the 122-residue chain is Large ribosomal subunit protein uL14 (122 aa).

This sequence belongs to the universal ribosomal protein uL14 family. Part of the 50S ribosomal subunit. Forms a cluster with proteins L3 and L19. In the 70S ribosome, L14 and L19 interact and together make contacts with the 16S rRNA in bridges B5 and B8.

Its function is as follows. Binds to 23S rRNA. Forms part of two intersubunit bridges in the 70S ribosome. The chain is Large ribosomal subunit protein uL14 from Gluconacetobacter diazotrophicus (strain ATCC 49037 / DSM 5601 / CCUG 37298 / CIP 103539 / LMG 7603 / PAl5).